Consider the following 83-residue polypeptide: Cell division topological specificity factor (83 aa).

The protein belongs to the MinE family.

Functionally, prevents the cell division inhibition by proteins MinC and MinD at internal division sites while permitting inhibition at polar sites. This ensures cell division at the proper site by restricting the formation of a division septum at the midpoint of the long axis of the cell. This chain is Cell division topological specificity factor, found in Marinobacter nauticus (strain ATCC 700491 / DSM 11845 / VT8) (Marinobacter aquaeolei).